Reading from the N-terminus, the 93-residue chain is Large ribosomal subunit protein uL23cz/uL23cy (93 aa).

This sequence belongs to the universal ribosomal protein uL23 family. Part of the 50S ribosomal subunit.

It is found in the plastid. Its subcellular location is the chloroplast. Its function is as follows. Binds to 23S rRNA. The sequence is that of Large ribosomal subunit protein uL23cz/uL23cy (rpl23-A) from Citrus sinensis (Sweet orange).